The following is an 871-amino-acid chain: MPPSPPSSAAADQWNIDYVNEDSPLSPRSFSLPPESPQLSTASPIHQRVSRKRQRATSQGLTYNVIRWPLLFFIFFIIYLEFSAYVITRQIVNVFEWLVAWRGYKAKLRKELRKAKTYDEWVNTAKKLDKHLGFDDWKDVEEDSYFDWALVRRVRRTLTRLRAANDTRGLMDALAVCVRANFAGTESVKMYSETFIGTKKAVEAHIKEVAACLDYVRTATDVSLEEKRAFFRAVNKHYGSSALCLSGGASFGYYHFGVIKAFLEADLLPRVITGTSAGGLCAALLCTRTDSELKELLVPELADKITACSDPFTVWFKRFRQTGARFDTIDWARRSMWFTRGSLTFKEAYTKTGRALNISVVPSDRHSPTILLNHLTAPNCLIWSAILASAAVPGILNPVVLMAKDRSGNIKPHNLGGSRFKDGSLREDIPLGSLHTQFNCNFSIVSQTNPHIHLFFFAPRGSVGRPVAHRKGKGWRGGFILSALESYIKLDLSKHFKVIRDLDLMPQILQSDWSGVFLQRFSGDLTLTPRSTIGDWFHILSDPDRPQMKRMLRVGERVAWPALGMVRNRMTVERAILRGRSEVRTALSHDRTSNDPATSLPETNPELTGALDHVPIESDVDAGFVSRSRRARNKTGSKGGDTPEEQLNLAGVFQLDESSKGVRRRKQKKSGMPLVAEPLGELPEVSPTHSPIATESPQRNYTSNFGDSFRHVRAPSLPALSSPFRSIRSNTSSSSNNVQSPSSSQRFRSQLSITRWFGGVSESSSDEEDEDLGGLQSGEATASSGEEGIPTFQLDSAVESHSDRSEDEMLHSGANVKEEYQSEESEGKIPIPGGERVTQEKIDASMASGERLRPAGGSKGSAKTPPVQDGA.

The tract at residues 20–53 is disordered; it reads NEDSPLSPRSFSLPPESPQLSTASPIHQRVSRKR. Positions 23–33 are enriched in low complexity; it reads SPLSPRSFSLP. Residues 68–88 traverse the membrane as a helical segment; the sequence is WPLLFFIFFIIYLEFSAYVIT. Residues 243–435 enclose the PNPLA domain; the sequence is LCLSGGASFG…REDIPLGSLH (193 aa). Positions 274 to 278 match the GXSXG motif; it reads GTSAG. Serine 276 acts as the Nucleophile in catalysis. The active-site Proton acceptor is aspartate 422. Disordered regions lie at residues 586 to 707, 720 to 748, and 760 to 871; these read ALSH…NFGD, LSSP…QRFR, and VSES…QDGA. 2 stretches are compositionally biased toward polar residues: residues 594–606 and 687–706; these read NDPA…TNPE and PTHS…SNFG. Positions 721-748 are enriched in low complexity; the sequence is SSPFRSIRSNTSSSSNNVQSPSSSQRFR. The segment covering 798 to 820 has biased composition (basic and acidic residues); the sequence is VESHSDRSEDEMLHSGANVKEEY.

The protein belongs to the PLPL family.

It localises to the membrane. In terms of biological role, probable lipid hydrolase. In Cryptococcus neoformans var. neoformans serotype D (strain B-3501A) (Filobasidiella neoformans), this protein is Patatin-like phospholipase domain-containing protein CNBE2340.